We begin with the raw amino-acid sequence, 265 residues long: Glutamate racemase (265 aa).

Residues 12 to 13 (DS) and 44 to 45 (YG) contribute to the substrate site. The active-site Proton donor/acceptor is Cys-75. A substrate-binding site is contributed by 76–77 (NT). The Proton donor/acceptor role is filled by Cys-186. Substrate is bound at residue 187–188 (TH).

Belongs to the aspartate/glutamate racemases family.

It carries out the reaction L-glutamate = D-glutamate. Its pathway is cell wall biogenesis; peptidoglycan biosynthesis. In terms of biological role, provides the (R)-glutamate required for cell wall biosynthesis. This Pseudomonas putida (strain ATCC 47054 / DSM 6125 / CFBP 8728 / NCIMB 11950 / KT2440) protein is Glutamate racemase.